Reading from the N-terminus, the 216-residue chain is UDP-N-acetylglucosamine transferase subunit ALG14 (216 aa).

The Lumenal segment spans residues 1–3 (MVC). The chain crosses the membrane as a helical span at residues 4–24 (VLVLAAAAGAVAVFLILRIWV). At 25–216 (VLRSMDVTPR…PKSVYLGRIV (192 aa)) the chain is on the cytoplasmic side.

The protein belongs to the ALG14 family. Forms with ALG13 the active heterodimeric UDP-N-acetylglucosamine transferase complex.

Its subcellular location is the endoplasmic reticulum membrane. Part of the UDP-N-acetylglucosamine transferase complex that operates in the biosynthetic pathway of dolichol-linked oligosaccharides, the glycan precursors employed in protein asparagine (N)-glycosylation. The assembly of dolichol-linked oligosaccharides begins on the cytosolic side of the endoplasmic reticulum membrane and finishes in its lumen. The sequential addition of sugars to dolichol pyrophosphate produces dolichol-linked oligosaccharides containing fourteen sugars, including two GlcNAcs, nine mannoses and three glucoses. Once assembled, the oligosaccharides are transferred from the lipid to nascent proteins by oligosaccharyltransferases. Functions as a protein-membrane adapter recruiting ALG13 at the cytoplasmic face of the endoplasmic reticulum, where the complex catalyzes the second step of dolichol pyrophosphate biosynthesis, transferring a beta1,4-linked N-acetylglucosamine (GlcNAc) from UDP-GlcNAc to GlcNAc-pyrophosphatedolichol (Gn-PDol) to produce N,N'-diacetylchitobiosyl diphosphodolichol. N,N'-diacetylchitobiosyl diphosphodolichol is a substrate for ALG1, the following enzyme in the biosynthetic pathway. The sequence is that of UDP-N-acetylglucosamine transferase subunit ALG14 from Homo sapiens (Human).